A 223-amino-acid polypeptide reads, in one-letter code: GTP cyclohydrolase 1 (223 aa).

Residues Cys114, His117, and Cys185 each coordinate Zn(2+).

The protein belongs to the GTP cyclohydrolase I family. In terms of assembly, homomer.

The enzyme catalyses GTP + H2O = 7,8-dihydroneopterin 3'-triphosphate + formate + H(+). It functions in the pathway cofactor biosynthesis; 7,8-dihydroneopterin triphosphate biosynthesis; 7,8-dihydroneopterin triphosphate from GTP: step 1/1. The protein is GTP cyclohydrolase 1 of Chlorobium chlorochromatii (strain CaD3).